The primary structure comprises 1134 residues: RNA-binding protein NAB6 (1134 aa).

Ser-2 carries the post-translational modification N-acetylserine. Disordered stretches follow at residues 112-133 (RPVSNHNGYNGNSNSNQNNTNN), 151-173 (RNNNSTRNVTHNNNKGCDTRNNS), and 464-491 (SVPSVTAGNNNDSNNNGNNNKSNMSGIT). Composition is skewed to low complexity over residues 115-133 (SNHNGYNGNSNSNQNNTNN) and 151-164 (RNNNSTRNVTHNNN). A phosphoserine mark is found at Ser-464 and Ser-467. Residues 471-489 (GNNNDSNNNGNNNKSNMSG) are compositionally biased toward low complexity. An RRM domain is found at 653 to 726 (RTIYIGNINP…NMLRVGWGHY (74 aa)). Disordered stretches follow at residues 918-959 (LDAH…FGGL) and 1043-1092 (NYRS…GSFA). Residues 1057-1081 (STLSYNHSKNNETPMQDIFTNGETA) are compositionally biased toward polar residues. Residues 1083–1092 (NRKKKRGSFA) show a composition bias toward basic residues.

The protein resides in the cytoplasm. RNA-binding protein that associates with mRNAs encoding cell wall proteins. The protein is RNA-binding protein NAB6 (NAB6) of Saccharomyces cerevisiae (strain ATCC 204508 / S288c) (Baker's yeast).